The chain runs to 486 residues: Cardiolipin synthase A (486 aa).

Transmembrane regions (helical) follow at residues 3–23 (TFYT…IASV) and 38–58 (MAWL…YLSF). PLD phosphodiesterase domains lie at 219-246 (MDLR…VDPR) and 399-426 (EGGL…DMRS). Catalysis depends on residues H224, K226, D231, H404, K406, and D411.

Belongs to the phospholipase D family. Cardiolipin synthase subfamily. ClsA sub-subfamily.

It localises to the cell inner membrane. The catalysed reaction is 2 a 1,2-diacyl-sn-glycero-3-phospho-(1'-sn-glycerol) = a cardiolipin + glycerol. In terms of biological role, catalyzes the reversible phosphatidyl group transfer from one phosphatidylglycerol molecule to another to form cardiolipin (CL) (diphosphatidylglycerol) and glycerol. The polypeptide is Cardiolipin synthase A (Edwardsiella ictaluri (strain 93-146)).